We begin with the raw amino-acid sequence, 423 residues long: UPF0229 protein PST_0721 (423 aa).

Positions 84 to 109 (AGERIPRPQGGGGGQGAGQASNSGEG) are disordered.

The protein belongs to the UPF0229 family.

The sequence is that of UPF0229 protein PST_0721 from Stutzerimonas stutzeri (strain A1501) (Pseudomonas stutzeri).